Consider the following 610-residue polypeptide: Phosphoenolpyruvate carboxykinase [GTP] (610 aa).

Residues Arg82 and 221 to 223 (YGG) contribute to the substrate site. Residues Lys230 and His250 each contribute to the Mn(2+) site. Ser272 contacts substrate. 273 to 278 (ACGKTN) is a GTP binding site. Residue Cys274 is part of the active site. Position 297 (Asp297) interacts with Mn(2+). Residue 387–389 (NSR) participates in substrate binding. Residues Arg389, Arg420, and 515-518 (FGDN) each bind GTP.

It belongs to the phosphoenolpyruvate carboxykinase [GTP] family. Monomer. Mn(2+) serves as cofactor.

It is found in the cytoplasm. It catalyses the reaction oxaloacetate + GTP = phosphoenolpyruvate + GDP + CO2. It functions in the pathway carbohydrate biosynthesis; gluconeogenesis. Its function is as follows. Catalyzes the conversion of oxaloacetate (OAA) to phosphoenolpyruvate (PEP), the rate-limiting step in the metabolic pathway that produces glucose from lactate and other precursors derived from the citric acid cycle. This is Phosphoenolpyruvate carboxykinase [GTP] from Corynebacterium glutamicum (strain R).